Consider the following 311-residue polypeptide: Ribonuclease Z (311 aa).

His-63, His-65, Asp-67, His-68, His-141, Asp-212, and His-270 together coordinate Zn(2+). Asp-67 acts as the Proton acceptor in catalysis.

Belongs to the RNase Z family. In terms of assembly, homodimer. Requires Zn(2+) as cofactor.

The catalysed reaction is Endonucleolytic cleavage of RNA, removing extra 3' nucleotides from tRNA precursor, generating 3' termini of tRNAs. A 3'-hydroxy group is left at the tRNA terminus and a 5'-phosphoryl group is left at the trailer molecule.. Functionally, zinc phosphodiesterase, which displays some tRNA 3'-processing endonuclease activity. Probably involved in tRNA maturation, by removing a 3'-trailer from precursor tRNA. The chain is Ribonuclease Z from Lactiplantibacillus plantarum (strain ATCC BAA-793 / NCIMB 8826 / WCFS1) (Lactobacillus plantarum).